The following is a 500-amino-acid chain: L-arabinose isomerase (500 aa).

Mn(2+) contacts are provided by glutamate 306, glutamate 333, histidine 350, and histidine 450.

Belongs to the arabinose isomerase family. Homohexamer. Requires Mn(2+) as cofactor.

The enzyme catalyses beta-L-arabinopyranose = L-ribulose. The protein operates within carbohydrate degradation; L-arabinose degradation via L-ribulose; D-xylulose 5-phosphate from L-arabinose (bacterial route): step 1/3. In terms of biological role, catalyzes the conversion of L-arabinose to L-ribulose. The protein is L-arabinose isomerase of Salmonella choleraesuis (strain SC-B67).